We begin with the raw amino-acid sequence, 381 residues long: L-lactate dehydrogenase (381 aa).

The 380-residue stretch at 1–380 folds into the FMN hydroxy acid dehydrogenase domain; that stretch reads MIISASTDYR…SADSLVRELG (380 aa). Tyr24 lines the substrate pocket. Positions 106 and 127 each coordinate FMN. Tyr129 provides a ligand contact to substrate. Position 155 (Thr155) interacts with FMN. Residue Arg164 coordinates substrate. Lys251 provides a ligand contact to FMN. The active-site Proton acceptor is His275. Arg278 is a substrate binding site. An FMN-binding site is contributed by 306-330; the sequence is DSGIRTGLDVVRMIALGADSVLLGR.

This sequence belongs to the FMN-dependent alpha-hydroxy acid dehydrogenase family. In terms of assembly, homotetramer. It depends on FMN as a cofactor.

The protein resides in the cell inner membrane. It carries out the reaction (S)-lactate + A = pyruvate + AH2. Functionally, catalyzes the conversion of L-lactate to pyruvate. Is coupled to the respiratory chain. The protein is L-lactate dehydrogenase of Pseudomonas aeruginosa (strain LESB58).